Here is a 193-residue protein sequence, read N- to C-terminus: Cysteine and glycine-rich protein 1 (193 aa).

The LIM zinc-binding 1 domain maps to C10–C61. The short motif at K64 to K69 is the Nuclear localization signal element. The residue at position 81 (S81) is a Phosphoserine. At K84 the chain carries N6-acetyllysine. K91 participates in a covalent cross-link: Glycyl lysine isopeptide (Lys-Gly) (interchain with G-Cter in SUMO2). Residues K112, K131, K137, and K161 each carry the N6-acetyllysine modification. The LIM zinc-binding 2 domain occupies C119–C170. S192 carries the post-translational modification Phosphoserine.

In terms of assembly, interacts with ASCC1; ASCC2 and TRIP4.

Its subcellular location is the nucleus. In terms of biological role, could play a role in neuronal development. This Rattus norvegicus (Rat) protein is Cysteine and glycine-rich protein 1 (Csrp1).